The following is a 94-amino-acid chain: DNA gyrase subunit A (94 aa).

Residues 35–94 (LPDVRDGLKPVHRRILYGLNEQGMTPDKPYKKSARIVGDVMGKYHPHGDSSIYEAMVRMA) form the Topo IIA-type catalytic domain.

The protein belongs to the type II topoisomerase GyrA/ParC subunit family. Heterotetramer, composed of two GyrA and two GyrB chains. In the heterotetramer, GyrA contains the active site tyrosine that forms a transient covalent intermediate with DNA, while GyrB binds cofactors and catalyzes ATP hydrolysis.

It is found in the cytoplasm. It carries out the reaction ATP-dependent breakage, passage and rejoining of double-stranded DNA.. Functionally, a type II topoisomerase that negatively supercoils closed circular double-stranded (ds) DNA in an ATP-dependent manner to modulate DNA topology and maintain chromosomes in an underwound state. Negative supercoiling favors strand separation, and DNA replication, transcription, recombination and repair, all of which involve strand separation. Also able to catalyze the interconversion of other topological isomers of dsDNA rings, including catenanes and knotted rings. Type II topoisomerases break and join 2 DNA strands simultaneously in an ATP-dependent manner. This is DNA gyrase subunit A from Staphylococcus epidermidis.